The following is a 672-amino-acid chain: MMSNVANASQRQENPYIIPLPPSSTVETSTEPPRTLWMGDLDPSFDEATIEEIWSKLDKKVIVKLIRAKKNLLIPCSSTSSSNNNTSEENAENQQSASNSTDQLDNSQMININGISFIDPSTTQLHHAGYCFVEFETQKDAKFALSLNATPLPNFYSPTTNSQTNPTFKRTFRLNWASGATLQSSIPSTPEFSLFVGDLSPTATEADLLSLFQTRFKSVKTVRVMTDPLTGSSRCFGFVRFGDEDERRRALIEMSGKWFQGRALRVAYATPRNNMMLQLQEQQQQQQQLQQQHQQLDQEDNNGPLLIKTANNLIQNNSNMLPLNALHNAPPMHLNEGGISNMRVNDSLPSNTYNTDPTNTTVFVGGLVPKTTEFQLRSLFKPFGPILNVRIPNGKNCGFVKFEKRIDAEASIQGLQGFIVGGSPIRLSWGRPSSSNAKTNSTIMGASQYMSSNGLRAPSAASSVDNSKQILEQYAEDKRRLFLHQQQQQQQQQQQDGNFSMEQMAHNNYYNYNNYDYHRNKNGSHSDLVNLQRSNVPYMQEDGALYPHQYSSPSYSLHPTGNQFSNATNNLPQFGNAMSISMQLPNGNSNKTASSMNTNPNTNMIMNSNMNMNMNVNPVPYGMGNGANMYDVSRMMTPPLNIAPNSNNSKSSIMNKHPNRNNVPPIHPSLLH.

The residue at position 1 (M1) is an N-acetylmethionine. Composition is skewed to polar residues over residues 1 to 13 (MMSN…QRQE) and 23 to 32 (SSTVETSTEP). Disordered regions lie at residues 1-40 (MMSN…WMGD) and 77-102 (SSTS…NSTD). The residue at position 2 (M2) is an N-acetylserine. RRM domains are found at residues 36–159 (LWMG…YSPT), 192–271 (FSLF…YATP), and 360–432 (TTVF…WGRP). Positions 77–96 (SSTSSSNNNTSEENAENQQS) are enriched in low complexity. At S524 the chain carries Phosphoserine. The segment at 640-672 (LNIAPNSNNSKSSIMNKHPNRNNVPPIHPSLLH) is disordered. Low complexity predominate over residues 645-656 (NSNNSKSSIMNK).

May be an RNA-binding protein involved in control of an RNA processing pathway that influences the regulation of cell growth in early log phase. Can bind to RNA and single-stranded DNA but not double-stranded DNA. The chain is Negative growth regulatory protein NGR1 (NGR1) from Saccharomyces cerevisiae (strain ATCC 204508 / S288c) (Baker's yeast).